A 683-amino-acid polypeptide reads, in one-letter code: Synaptic vesicle glycoprotein 2B (683 aa).

Positions 1-10 (MDDYRYRDNY) are enriched in basic and acidic residues. The tract at residues 1-72 (MDDYRYRDNY…QTKMAPSRAD (72 aa)) is disordered. Residues 1–110 (MDDYRYRDNY…ECGHGRFQWT (110 aa)) are Cytoplasmic-facing. A Phosphoserine modification is found at S33. T36 bears the Phosphothreonine mark. A helical membrane pass occupies residues 111 to 131 (LFFVLVLALMADGVEVFVVSF). Over 132 to 148 (ALPSAEKDMCLSSSKKG) the chain is Extracellular. Residues 149 to 169 (MLGLIVYLGMMAGAFILGGLA) traverse the membrane as a helical segment. Topologically, residues 170 to 182 (DKLGRKKVLSMSL) are cytoplasmic. A helical transmembrane segment spans residues 183–203 (AINASFASLSSFVQGYGAFLF). The Extracellular segment spans residues 204–205 (CR). Residues 206 to 226 (LISGIGIGGSLPIVFAYFSEF) traverse the membrane as a helical segment. The Cytoplasmic segment spans residues 227 to 237 (LSREKRGEHLS). Residues 238–258 (WLGIFWMTGGIYASAMAWSII) traverse the membrane as a helical segment. At 259 to 277 (PHYGWGFSMGTNYHFHSWR) the chain is on the extracellular side. A helical membrane pass occupies residues 278-298 (VFVIVCALPATVSMVALKFMP). The Cytoplasmic portion of the chain corresponds to 299–390 (ESPRFLLEMG…CVMGPYRMNT (92 aa)). A helical transmembrane segment spans residues 391–411 (LILAVVWFTMALSYYGLTVWF). The Extracellular segment spans residues 412–535 (PDMIRYFQDE…CHMDFEEDND (124 aa)). Y423 bears the Phosphotyrosine mark. N441, N491, and N516 each carry an N-linked (GlcNAc...) asparagine glycan. The chain crosses the membrane as a helical span at residues 536–556 (FLIYLVSFLGSLSVLPGNIIS). Topologically, residues 557 to 565 (ALLMDRIGR) are cytoplasmic. A helical membrane pass occupies residues 566 to 586 (LKMIGGSMLISAVCCFFLFFG). Over 587 to 592 (NSESAM) the chain is Extracellular. A helical membrane pass occupies residues 593 to 613 (IGWQCLFCGTSIAAWNALDVI). Topologically, residues 614-626 (TVELYPTNQRATA) are cytoplasmic. Residues 627–649 (FGILNGLCKLGAILGNTIFASFV) traverse the membrane as a helical segment. The Extracellular segment spans residues 650-653 (GITK). The chain crosses the membrane as a helical span at residues 654 to 672 (VVPILLAAASLVGGGLVAL). Topologically, residues 673–683 (RLPETREQVLM) are cytoplasmic.

The protein belongs to the major facilitator superfamily. Interacts with SYT1 in a calcium-independent manner. Forms a complex with SYT1, syntaxin-1 and SNAP25. As to quaternary structure, (Microbial infection) Interacts with C.botulinum neurotoxin type A1 and type A2 (BoNT/A, botA). Interaction is improved by glycosylation of SV2. In terms of assembly, (Microbial infection) Interacts with C.botulinum neurotoxin type D (BoNT/D, botD). (Microbial infection) Interacts with C.botulinum neurotoxin type E (BoNT/E). Interaction requires glycosylation of SV2 proteins. As to quaternary structure, (Microbial infection) Interacts with C.botulinum neurotoxin type F (BoNT/F). Interaction requires glycosylation of SV2 proteins. N-glycosylated. Post-translationally, the N-terminal cytoplasmic domain is phosphorylated by CK1. In terms of tissue distribution, widely expressed throughout the brain. Specifically expressed by pinealocytes in the pineal gland. Also detected in testis (at protein level). Specifically expressed in neural tissues. Expressed in the spinal cord and in all brain regions with a stronger expression in hippocampus and cortex.

It localises to the cytoplasmic vesicle. The protein localises to the secretory vesicle. The protein resides in the synaptic vesicle membrane. Its subcellular location is the acrosome. Its function is as follows. Probably plays a role in the control of regulated secretion in neural and endocrine cells. (Microbial infection) Receptor for C.botulinum neurotoxin type A (BoNT/A, botA); the toxin binds via extracellular loop 4. Restores uptake of BoNT/A in mouse and rat cells that are deleted for SV2 receptor. Glycosylation of SV2B is not essential for receptor activity, but enhances the interaction. Also serves as a receptor for the closely related C.botulinum neurotoxin type A2; glycosylation is not essential but enhances the interaction. Functionally, (Microbial infection) Possible receptor for C.botulinum neurotoxin type D (BoNT/D, botD); BoNT/D does not bind to extracellular loop 4 as do BoNT/A and BoNT/E. Another group does not find a convincing interaction with SV2. In terms of biological role, (Microbial infection) Receptor for C.botulinum neurotoxin type E (BoNT/E); the toxin probably binds via extracellular loop 4. Restores uptake of BoNT/E in mouse cells that are deleted for SV2 receptor. Glycosylation of SV2B is not essential for receptor activity, but enhances the interaction. Its function is as follows. (Microbial infection) Receptor for C.botulinum neurotoxin type F (BoNT/F); binding requires glycosylation of this protein. In Rattus norvegicus (Rat), this protein is Synaptic vesicle glycoprotein 2B (Sv2b).